A 209-amino-acid polypeptide reads, in one-letter code: MSRAATTRMGLLEVRARRAVAGKGARLLRAKREVLASELWRLVHDVLEGRARLDEALRRAVKALELAKALEGEERLASLALPAARAVPLAVTVRRVWGVPTPSVAAPPLVRAADQRGSSPVSWGPSGAAAARHHEESLEVLLTIASKELHLARLGEEIQETSRRINALEQLVLPALRSEASRIAAALDERDREDAVRLRRFRARHPRPA.

The protein belongs to the V-ATPase D subunit family.

Functionally, produces ATP from ADP in the presence of a proton gradient across the membrane. The protein is V-type ATP synthase subunit D of Anaeromyxobacter dehalogenans (strain 2CP-C).